The following is a 94-amino-acid chain: Copper resistance protein K (94 aa).

Positions 1–20 are cleaved as a signal peptide; the sequence is MKQKLMVGAFIAAVSLSAAA.

In terms of assembly, monomer in the copper-bound form. Homodimer as apoprotein. Dissociates into monomers upon copper binding.

Its subcellular location is the periplasm. Involved in resistance to copper. Can bind up to 2 copper ions. Has higher affinity for Cu(+) than for Cu(2+). The polypeptide is Copper resistance protein K (copK) (Cupriavidus metallidurans (strain ATCC 43123 / DSM 2839 / NBRC 102507 / CH34) (Ralstonia metallidurans)).